A 79-amino-acid polypeptide reads, in one-letter code: U-scoloptoxin(15)-Sm1a (79 aa).

The signal sequence occupies residues 1–25 (MKMNVVVLSVVVLLLFIANIQQTEA).

It belongs to the scoloptoxin-15 family. In terms of processing, contains 2 disulfide bonds. Expressed by the venom gland.

The protein resides in the secreted. This Scolopendra morsitans (Tanzanian blue ringleg centipede) protein is U-scoloptoxin(15)-Sm1a.